The sequence spans 602 residues: Translation initiation factor IF-2 (602 aa).

Residues 112–281 form the tr-type G domain; sequence KRAPIITIMG…LLLCEVLDLK (170 aa). The interval 121 to 128 is G1; that stretch reads GHVDHGKT. 121 to 128 provides a ligand contact to GTP; that stretch reads GHVDHGKT. The interval 146-150 is G2; that stretch reads GITQH. The segment at 167–170 is G3; the sequence is DTPG. Residues 167–171 and 221–224 contribute to the GTP site; these read DTPGH and NKMD. The segment at 221 to 224 is G4; that stretch reads NKMD. Positions 257-259 are G5; the sequence is SAL.

Belongs to the TRAFAC class translation factor GTPase superfamily. Classic translation factor GTPase family. IF-2 subfamily.

Its subcellular location is the cytoplasm. In terms of biological role, one of the essential components for the initiation of protein synthesis. Protects formylmethionyl-tRNA from spontaneous hydrolysis and promotes its binding to the 30S ribosomal subunits. Also involved in the hydrolysis of GTP during the formation of the 70S ribosomal complex. The sequence is that of Translation initiation factor IF-2 from Mycoplasmopsis synoviae (strain 53) (Mycoplasma synoviae).